We begin with the raw amino-acid sequence, 432 residues long: E3 ubiquitin-protein ligase RNF135 (432 aa).

The segment at 21-63 adopts an RING-type zinc-finger fold; sequence CIICQGLLDWPATLPCGHSFCRHCLEALWGARDARRWACPTCR. The tract at residues 95–121 is disordered; the sequence is GSDPAHCPCPGSSSLSSAAARPRRRPE. The span at 102 to 114 shows a compositional bias: low complexity; sequence PCPGSSSLSSAAA. 2 coiled-coil regions span residues 121–156 and 191–216; these read ELQR…QNQR and DTAA…ESVT. Residues 241–432 enclose the B30.2/SPRY domain; sequence PDQSHPALRR…NYLIIKQVKV (192 aa).

In terms of assembly, homodimer. Interacts (homodimer) with RIGI (double-stranded RNA-bound oligomeric form); involved in both RIGI ubiquitination, oligomerization into filaments associated with viral RNAs and the bridging of these filaments. Interacts with UBE2D3 and UBE2N; E2 ubiquitin ligases involved in RNF135-mediated ubiquitination of RIGI and activation of the RIG-I signaling pathway. Interacts with PCBP2. In terms of processing, (Microbial infection) Cleaved and inactivated by hepatitis C virus NS3/NS4A. As to expression, expressed in skeletal muscle, spleen, kidney, placenta, prostate, stomach, thyroid and tongue. Also weakly expressed in heart, thymus, liver and lung.

The protein localises to the cytoplasm. Its subcellular location is the stress granule. It carries out the reaction S-ubiquitinyl-[E2 ubiquitin-conjugating enzyme]-L-cysteine + [acceptor protein]-L-lysine = [E2 ubiquitin-conjugating enzyme]-L-cysteine + N(6)-ubiquitinyl-[acceptor protein]-L-lysine.. The protein operates within protein modification; protein ubiquitination. Its function is as follows. E2-dependent E3 ubiquitin-protein ligase that functions as a RIGI coreceptor in the sensing of viral RNAs in cell cytoplasm and the activation of the antiviral innate immune response. Together with the UBE2D3, UBE2N and UB2V1 E2 ligases, catalyzes the 'Lys-63'-linked polyubiquitination of RIGI oligomerized on viral RNAs, an essential step in the activation of the RIG-I signaling pathway. Through a ubiquitin-independent parallel mechanism, which consists in bridging RIGI filaments forming on longer viral RNAs, further activates the RIG-I signaling pathway. This second mechanism that synergizes with the ubiquitin-dependent one would thereby allow an RNA length-dependent regulation of the RIG-I signaling pathway. Associated with the E2 ligase UBE2N, also constitutively synthesizes unanchored 'Lys-63'-linked polyubiquitin chains that may also activate the RIG-I signaling pathway. This Homo sapiens (Human) protein is E3 ubiquitin-protein ligase RNF135.